The following is a 123-amino-acid chain: Large ribosomal subunit protein bL12 (123 aa).

It belongs to the bacterial ribosomal protein bL12 family. As to quaternary structure, homodimer. Part of the ribosomal stalk of the 50S ribosomal subunit. Forms a multimeric L10(L12)X complex, where L10 forms an elongated spine to which 2 to 4 L12 dimers bind in a sequential fashion. Binds GTP-bound translation factors.

Functionally, forms part of the ribosomal stalk which helps the ribosome interact with GTP-bound translation factors. Is thus essential for accurate translation. The chain is Large ribosomal subunit protein bL12 from Cytophaga hutchinsonii (strain ATCC 33406 / DSM 1761 / CIP 103989 / NBRC 15051 / NCIMB 9469 / D465).